A 281-amino-acid polypeptide reads, in one-letter code: Probable endonuclease 4 (281 aa).

Zn(2+) is bound by residues His-67, His-107, Glu-144, Asp-178, His-181, His-215, Asp-228, His-230, and Glu-260.

The protein belongs to the AP endonuclease 2 family. It depends on Zn(2+) as a cofactor.

The enzyme catalyses Endonucleolytic cleavage to 5'-phosphooligonucleotide end-products.. Its function is as follows. Endonuclease IV plays a role in DNA repair. It cleaves phosphodiester bonds at apurinic or apyrimidinic (AP) sites, generating a 3'-hydroxyl group and a 5'-terminal sugar phosphate. The sequence is that of Probable endonuclease 4 from Methanocorpusculum labreanum (strain ATCC 43576 / DSM 4855 / Z).